The sequence spans 422 residues: Histidine--tRNA ligase (422 aa).

Belongs to the class-II aminoacyl-tRNA synthetase family. As to quaternary structure, homodimer.

The protein localises to the cytoplasm. The enzyme catalyses tRNA(His) + L-histidine + ATP = L-histidyl-tRNA(His) + AMP + diphosphate + H(+). The polypeptide is Histidine--tRNA ligase (Alcanivorax borkumensis (strain ATCC 700651 / DSM 11573 / NCIMB 13689 / SK2)).